Reading from the N-terminus, the 101-residue chain is Chaperone modulatory protein CbpM (101 aa).

This sequence belongs to the CbpM family.

Functionally, interacts with CbpA and inhibits both the DnaJ-like co-chaperone activity and the DNA binding activity of CbpA. Together with CbpA, modulates the activity of the DnaK chaperone system. Does not inhibit the co-chaperone activity of DnaJ. This chain is Chaperone modulatory protein CbpM, found in Escherichia coli O1:K1 / APEC.